Reading from the N-terminus, the 41-residue chain is Cytochrome b559 subunit beta (41 aa).

A helical membrane pass occupies residues 16–32; that stretch reads WLAVHALAVPTVFFLGA. A heme-binding site is contributed by His-20.

The protein belongs to the PsbE/PsbF family. As to quaternary structure, heterodimer of an alpha subunit and a beta subunit. PSII is composed of 1 copy each of membrane proteins PsbA, PsbB, PsbC, PsbD, PsbE, PsbF, PsbH, PsbI, PsbJ, PsbK, PsbL, PsbM, PsbT, PsbX, PsbY, PsbZ, Psb30/Ycf12, at least 3 peripheral proteins of the oxygen-evolving complex and a large number of cofactors. It forms dimeric complexes. Heme b is required as a cofactor.

Its subcellular location is the plastid. The protein localises to the chloroplast thylakoid membrane. Its function is as follows. This b-type cytochrome is tightly associated with the reaction center of photosystem II (PSII). PSII is a light-driven water:plastoquinone oxidoreductase that uses light energy to abstract electrons from H(2)O, generating O(2) and a proton gradient subsequently used for ATP formation. It consists of a core antenna complex that captures photons, and an electron transfer chain that converts photonic excitation into a charge separation. In Chlorella vulgaris (Green alga), this protein is Cytochrome b559 subunit beta.